We begin with the raw amino-acid sequence, 299 residues long: GTP cyclohydrolase FolE2 (299 aa).

Belongs to the GTP cyclohydrolase IV family.

It carries out the reaction GTP + H2O = 7,8-dihydroneopterin 3'-triphosphate + formate + H(+). Its pathway is cofactor biosynthesis; 7,8-dihydroneopterin triphosphate biosynthesis; 7,8-dihydroneopterin triphosphate from GTP: step 1/1. In terms of biological role, converts GTP to 7,8-dihydroneopterin triphosphate. This chain is GTP cyclohydrolase FolE2, found in Klebsiella pneumoniae.